Here is a 169-residue protein sequence, read N- to C-terminus: Superoxide dismutase [Cu-Zn] 1 (169 aa).

The first 18 residues, 1–18 (MFEQWDALCAVLFSFSIA), serve as a signal peptide directing secretion. H65, H67, and H83 together coordinate Cu cation. A disulfide bridge connects residues C72 and C165. Zn(2+) contacts are provided by H83, H91, H100, and D103. Residue H145 participates in Cu cation binding.

Belongs to the Cu-Zn superoxide dismutase family. It depends on Cu cation as a cofactor. Requires Zn(2+) as cofactor.

It catalyses the reaction 2 superoxide + 2 H(+) = H2O2 + O2. Its function is as follows. Destroys radicals which are normally produced within the cells and which are toxic to biological systems. The polypeptide is Superoxide dismutase [Cu-Zn] 1 (sodC1) (Aquifex aeolicus (strain VF5)).